The chain runs to 323 residues: Mortality factor 4-like protein 1 (323 aa).

In terms of domain architecture, Tudor-knot spans 12–62 (QEGERVLCFHGPLLYEAKCVKVAIKDKQVKYFIHYSGWNKNWDEWVPESRV). Positions 77-143 (QKANQEQYAE…RKKRARVDPT (67 aa)) are disordered. A sufficient for interaction with SIN3A region spans residues 94-227 (PGKKTSGLQQ…VAGIKEYFNV (134 aa)). The residue at position 104 (lysine 104) is an N6-acetyllysine. Residues 125 to 191 (STSETPQPPR…FYLPAKKNVD (67 aa)) are interaction with RB1-1. Residues 149-303 (TFMNRVEVKV…FLKYLAKNSA (155 aa)) form a sufficient for interaction with PHF12 region. Positions 152–323 (NRVEVKVKIP…APPEYHRKAV (172 aa)) constitute an MRG domain. An interaction with RB1-2 region spans residues 284–305 (LALLLNYLHDFLKYLAKNSATL).

In terms of assembly, component of the NuA4 histone acetyltransferase complex which contains the catalytic subunit KAT5/TIP60 and the subunits EP400, TRRAP/PAF400, BRD8/SMAP, EPC1, DMAP1/DNMAP1, RUVBL1/TIP49, RUVBL2, ING3, actin, ACTL6A/BAF53A, MORF4L1/MRG15, MORF4L2/MRGX, MRGBP, YEATS4/GAS41, VPS72/YL1 and MEAF6. The NuA4 complex interacts with MYC and the adenovirus E1A protein. MORF4L1 may also participate in the formation of NuA4 related complexes which lack the KAT5/TIP60 catalytic subunit, but which include the SWI/SNF related protein SRCAP. Component of the mSin3A histone deacetylase complex, which includes SIN3A, HDAC2, ARID4B, MORF4L1, RBBP4/RbAp48, and RBBP7/RbAp46. May also interact with PHF12 and one or more as yet undefined members of the TLE (transducin-like enhancer of split) family of transcriptional repressors. Component of the SIN3B complex, which includes SIN3B, HDAC2 or HDAC1, PHF12 and MORF4L1. Interacts with RB1 and KAT8. Interacts with the N-terminus of MRFAP1. Found in a complex composed of MORF4L1, MRFAP1 and RB1. Interacts with the entire BRCA complex, which contains BRCA1, PALB2, BRCA2 and RAD51. Interacts with PALB2. Forms a complex with MSL1 and NUPR1.

The protein localises to the nucleus. Component of the NuA4 histone acetyltransferase (HAT) complex which is involved in transcriptional activation of select genes principally by acetylation of nucleosomal histones H4 and H2A. This modification may both alter nucleosome - DNA interactions and promote interaction of the modified histones with other proteins which positively regulate transcription. This complex may be required for the activation of transcriptional programs associated with oncogene and proto-oncogene mediated growth induction, tumor suppressor mediated growth arrest and replicative senescence, apoptosis, and DNA repair. The NuA4 complex ATPase and helicase activities seem to be, at least in part, contributed by the association of RUVBL1 and RUVBL2 with EP400. NuA4 may also play a direct role in DNA repair when directly recruited to sites of DNA damage. As part of the SIN3B complex represses transcription and counteracts the histone acetyltransferase activity of EP300 through the recognition H3K27ac marks by PHF12 and the activity of the histone deacetylase HDAC2. SIN3B complex is recruited downstream of the constitutively active genes transcriptional start sites through interaction with histones and mitigates histone acetylation and RNA polymerase II progression within transcribed regions contributing to the regulation of transcription. Required for homologous recombination repair (HRR) and resistance to mitomycin C (MMC). Involved in the localization of PALB2, BRCA2 and RAD51, but not BRCA1, to DNA-damage foci. This Rattus norvegicus (Rat) protein is Mortality factor 4-like protein 1 (Morf4l1).